The chain runs to 367 residues: Probable butyrate kinase (367 aa).

It belongs to the acetokinase family.

It localises to the cytoplasm. It carries out the reaction butanoate + ATP = butanoyl phosphate + ADP. The protein is Probable butyrate kinase of Bacillus cytotoxicus (strain DSM 22905 / CIP 110041 / 391-98 / NVH 391-98).